A 138-amino-acid chain; its full sequence is Large ribosomal subunit protein uL16 (138 aa).

Belongs to the universal ribosomal protein uL16 family. Part of the 50S ribosomal subunit.

Binds 23S rRNA and is also seen to make contacts with the A and possibly P site tRNAs. The chain is Large ribosomal subunit protein uL16 from Chlamydia muridarum (strain MoPn / Nigg).